A 576-amino-acid polypeptide reads, in one-letter code: Lysine--tRNA ligase (576 aa).

Mg(2+) is bound by residues E412 and E419.

Belongs to the class-II aminoacyl-tRNA synthetase family. As to quaternary structure, homodimer. Mg(2+) is required as a cofactor.

It is found in the cytoplasm. The enzyme catalyses tRNA(Lys) + L-lysine + ATP = L-lysyl-tRNA(Lys) + AMP + diphosphate. This Parabacteroides distasonis (strain ATCC 8503 / DSM 20701 / CIP 104284 / JCM 5825 / NCTC 11152) protein is Lysine--tRNA ligase.